The chain runs to 359 residues: Heme A synthase (359 aa).

Transmembrane regions (helical) follow at residues 8 to 28 (IMSI…VVGG), 94 to 114 (LLGR…CYLK), 124 to 144 (LLLI…MVKS), 159 to 179 (GHLL…LIII), and 215 to 235 (IIIF…GLDA). H274 provides a ligand contact to heme. 3 helical membrane-spanning segments follow: residues 276 to 296 (WFGI…IILN), 303 to 323 (MGMV…ITLL), and 328 to 348 (ILAA…FLFI). Position 334 (H334) interacts with heme.

It belongs to the COX15/CtaA family. Type 2 subfamily. Interacts with CtaB. Heme b serves as cofactor.

Its subcellular location is the cell membrane. The enzyme catalyses Fe(II)-heme o + 2 A + H2O = Fe(II)-heme a + 2 AH2. It participates in porphyrin-containing compound metabolism; heme A biosynthesis; heme A from heme O: step 1/1. Catalyzes the conversion of heme O to heme A by two successive hydroxylations of the methyl group at C8. The first hydroxylation forms heme I, the second hydroxylation results in an unstable dihydroxymethyl group, which spontaneously dehydrates, resulting in the formyl group of heme A. This Orientia tsutsugamushi (strain Boryong) (Rickettsia tsutsugamushi) protein is Heme A synthase.